A 588-amino-acid polypeptide reads, in one-letter code: Neuropeptide-like 1 (588 aa).

A propeptide spanning residues 1 to 179 is cleaved from the precursor; it reads MQCIPKKTFM…DPEVLEYSPD (179 aa). The segment at 115 to 143 is disordered; that stretch reads NGDLPITIQERESDNDDEEKRSASSSDNV. The residue at position 194 (Thr-194) is a Threonine amide. Serine amide occurs at positions 210, 227, and 244. The residue at position 260 (Tyr-260) is a Tyrosine amide. Glu-281 bears the Glutamic acid 1-amide mark. A propeptide spanning residues 285-299 is cleaved from the precursor; sequence SIASLARSGDWPSVA. Tyr-318 is subject to Tyrosine amide. The propeptide occupies 321–588; sequence SLSDDREAPS…SNSHIAPRSM (268 aa). Residues 342–382 form a disordered region; it reads GNSEGKENEWQATPFTVSEDLDEGKAKNRSNRRIEASQTRH.

It localises to the secreted. The polypeptide is Neuropeptide-like 1 (Camponotus floridanus (Florida carpenter ant)).